The following is a 302-amino-acid chain: Oxygen-dependent coproporphyrinogen-III oxidase (302 aa).

Ser94 is a binding site for substrate. A divalent metal cation-binding residues include His98 and His108. The active-site Proton donor is the His108. 110–112 (NVR) contacts substrate. A divalent metal cation contacts are provided by His147 and His177. The tract at residues 242 to 277 (YVEFNLVYDRGTLFGLQTGGRTESILMSMPPLVRWQ) is important for dimerization. A substrate-binding site is contributed by 260-262 (GGR).

Belongs to the aerobic coproporphyrinogen-III oxidase family. As to quaternary structure, homodimer. It depends on a divalent metal cation as a cofactor.

Its subcellular location is the cytoplasm. The catalysed reaction is coproporphyrinogen III + O2 + 2 H(+) = protoporphyrinogen IX + 2 CO2 + 2 H2O. Its pathway is porphyrin-containing compound metabolism; protoporphyrin-IX biosynthesis; protoporphyrinogen-IX from coproporphyrinogen-III (O2 route): step 1/1. In terms of biological role, involved in the heme biosynthesis. Catalyzes the aerobic oxidative decarboxylation of propionate groups of rings A and B of coproporphyrinogen-III to yield the vinyl groups in protoporphyrinogen-IX. In Shewanella baltica (strain OS155 / ATCC BAA-1091), this protein is Oxygen-dependent coproporphyrinogen-III oxidase.